A 1445-amino-acid chain; its full sequence is Protein HUA2-LIKE 1 (1445 aa).

The PWWP domain occupies 20 to 77 (LGDLVLAKVKGFPAWPAKIGQPEDWNQAPDPKKHFVQFYGTGEIGFVTPPDIQPFTSE). Disordered stretches follow at residues 133–197 (KYLN…SPDP), 211–302 (TCTD…DLNI), 319–356 (FENELGKSASGADESKRAAKRPRSEDAKDQKQCKSKRL), 409–439 (EHTSVSSFPGSLVKEGANHPEQKISSSSDSD), 460–491 (DDDDEDPKTPVHGGLSNIPIASTDAPKSANAS), 641–685 (GIPK…TSTP), and 797–835 (LTPSNHGRQSSSSNQAGTEENEERRFSSGHRSVGGSLSG). Composition is skewed to polar residues over residues 173 to 187 (QDSSISNNRNTSPSS) and 211 to 225 (TCTDHSDGTGNNLVN). Basic and acidic residues-rich tracts occupy residues 228–257 (RIIRKTTDDSNKRCKDEVRAKRVPDSRAAT), 274–293 (GQDHGSKKGQDHGCRKESSD), and 331–350 (DESKRAAKRPRSEDAKDQKQ). 2 stretches are compositionally biased toward polar residues: residues 660 to 673 (RVSSSHSQTANQRS) and 797 to 814 (LTPSNHGRQSSSSNQAGT). The 142-residue stretch at 838–979 (EAAISRDTFE…RYIGDLGASG (142 aa)) folds into the CID domain. The tract at residues 1110-1203 (PATTCATELP…SLPLQPGFAP (94 aa)) is disordered. The span at 1124 to 1170 (GSPPLPHESPPSPPPQPPSSPPPPSSPPQLAPAPPPSDHCLPPPTAP) shows a compositional bias: pro residues.

As to expression, expressed throughout young primordia, and vegetative and reproductive apices.

The protein localises to the nucleus. Its function is as follows. Probable transcription factor that acts with partial redundancy with HULK2 and HULK3. Plays diverse and essential roles in the control of plant development, physiology and flowering time. The chain is Protein HUA2-LIKE 1 from Arabidopsis thaliana (Mouse-ear cress).